The chain runs to 424 residues: Protein shisa-9 (424 aa).

The signal sequence occupies residues Met-1–Ala-23. Topologically, residues Gln-24 to Lys-149 are extracellular. N-linked (GlcNAc...) asparagine glycans are attached at residues Asn-45, Asn-89, and Asn-116. A helical membrane pass occupies residues Thr-150–Phe-170. The Cytoplasmic portion of the chain corresponds to Thr-171 to Val-424. The disordered stretch occupies residues Pro-333 to Val-424. Polar residues predominate over residues Phe-414–Val-424.

The protein belongs to the shisa family. SHISA9 subfamily. As to quaternary structure, component of some AMPA receptors (ionotropic glutamate receptors) complex, at least composed of some AMPA receptor (GRIA1, GRIA2 and/or GRIA3), CACNG2 and SHISA9, as well as low level of DLG4.

Its subcellular location is the cell projection. It is found in the dendritic spine membrane. The protein localises to the synapse. Its function is as follows. Regulator of short-term neuronal synaptic plasticity in the dentate gyrus. Associates with AMPA receptors (ionotropic glutamate receptors) in synaptic spines and promotes AMPA receptor desensitization at excitatory synapses. The protein is Protein shisa-9 (SHISA9) of Homo sapiens (Human).